We begin with the raw amino-acid sequence, 334 residues long: Proline-serine-threonine phosphatase-interacting protein 2 (334 aa).

The 261-residue stretch at 4-264 (SLFKGNFWST…SLETCSIEKD (261 aa)) folds into the F-BAR domain. Positions 66-163 (GQSEINTLKR…AEQAVHRSAN (98 aa)) form a coiled coil. Residues 288-322 (YSPQRNAAPPGKTTGPNPARRGPLPVPKRIPDDPD) are disordered. Phosphotyrosine is present on residues Tyr323 and Tyr329.

Post-translationally, phosphorylated on tyrosine. Expressed in macrophage-containing tissues, including bone marrow, spleen, liver, kidney, intestine and brain.

It localises to the cytoplasm. Its subcellular location is the membrane. Its function is as follows. Binds to F-actin. May be involved in regulation of the actin cytoskeleton. The protein is Proline-serine-threonine phosphatase-interacting protein 2 (Pstpip2) of Mus musculus (Mouse).